The sequence spans 323 residues: Putative CDC123-like protein L884 (323 aa).

The protein belongs to the CDC123 family.

This Acanthamoeba polyphaga mimivirus (APMV) protein is Putative CDC123-like protein L884.